We begin with the raw amino-acid sequence, 176 residues long: Cytochrome b561 homolog 1 (176 aa).

Topologically, residues 1 to 7 (MNRFSKT) are cytoplasmic. Residues 8 to 28 (QIYLHWITLLFVAITYAAMEL) traverse the membrane as a helical segment. A heme b-binding site is contributed by His12. Topologically, residues 29 to 45 (RGWFPKGSSTYLLMRET) are periplasmic. His46 lines the heme b pocket. The helical transmembrane segment at 46-63 (HYNAGIFVWVLMFSRLII) threads the bilayer. The Cytoplasmic portion of the chain corresponds to 64-85 (KHRYSDPSIVPPPPAWQMKAAS). The chain crosses the membrane as a helical span at residues 86 to 106 (LMHIMLYITFLALPLLGIALM). Topologically, residues 107 to 141 (AYSGKSWSFLGFNVSPFVTPNSEIKALIKNIHETW) are periplasmic. 2 residues coordinate heme b: His138 and His152. The helical transmembrane segment at 142 to 162 (ANIGYFLIAAHAGAALFHHYI) threads the bilayer. Over 163–176 (QKDNTLLRMMPRRK) the chain is Cytoplasmic.

It belongs to the cytochrome b561 family. Heme b is required as a cofactor.

It is found in the cell inner membrane. This chain is Cytochrome b561 homolog 1 (yodB), found in Escherichia coli (strain K12).